The following is a 199-amino-acid chain: MFALFIWSFMAIILGIDPGSRVTGYGIIRQTGRTLEYLGSGAIRTQVEDLPTRLKRIYAGVTEIITQFRPDMFAIEEVFLAKNPNSALKLGQARGTAIVAAVNQNLPVFEYAARLVKQTVTGSGSADKVQVQDMVTRILRLSDKPQADAADALAIAITHAHTIQHSLQVATSAKSTENHEKTTALLRTRYSRGRFRLKI.

Residues aspartate 17, glutamate 76, and aspartate 148 contribute to the active site. Mg(2+)-binding residues include aspartate 17, glutamate 76, and aspartate 148.

The protein belongs to the RuvC family. In terms of assembly, homodimer which binds Holliday junction (HJ) DNA. The HJ becomes 2-fold symmetrical on binding to RuvC with unstacked arms; it has a different conformation from HJ DNA in complex with RuvA. In the full resolvosome a probable DNA-RuvA(4)-RuvB(12)-RuvC(2) complex forms which resolves the HJ. Mg(2+) serves as cofactor.

It is found in the cytoplasm. It carries out the reaction Endonucleolytic cleavage at a junction such as a reciprocal single-stranded crossover between two homologous DNA duplexes (Holliday junction).. In terms of biological role, the RuvA-RuvB-RuvC complex processes Holliday junction (HJ) DNA during genetic recombination and DNA repair. Endonuclease that resolves HJ intermediates. Cleaves cruciform DNA by making single-stranded nicks across the HJ at symmetrical positions within the homologous arms, yielding a 5'-phosphate and a 3'-hydroxyl group; requires a central core of homology in the junction. The consensus cleavage sequence is 5'-(A/T)TT(C/G)-3'. Cleavage occurs on the 3'-side of the TT dinucleotide at the point of strand exchange. HJ branch migration catalyzed by RuvA-RuvB allows RuvC to scan DNA until it finds its consensus sequence, where it cleaves and resolves the cruciform DNA. This chain is Crossover junction endodeoxyribonuclease RuvC, found in Mannheimia succiniciproducens (strain KCTC 0769BP / MBEL55E).